Reading from the N-terminus, the 163-residue chain is NADH-quinone oxidoreductase subunit I (163 aa).

2 consecutive 4Fe-4S ferredoxin-type domains span residues 54-84 (LRRYPNGEERCIACKLCEAVCPAQAITIDAE) and 94-123 (TRYDIDMTKCIYCGFCQEACPVDAIVEGPN). [4Fe-4S] cluster-binding residues include Cys64, Cys67, Cys70, Cys74, Cys103, Cys106, Cys109, and Cys113.

This sequence belongs to the complex I 23 kDa subunit family. As to quaternary structure, NDH-1 is composed of at least 14 different subunits, Nqo1 to Nqo14. The complex has a L-shaped structure, with the hydrophobic arm (subunits Nqo7, Nqo8, Nqo10 to Nqo14) embedded in the inner membrane and the hydrophilic peripheral arm (subunits Nqo1 to Nqo6, Nqo9) protruding into the bacterial cytoplasm. The hydrophilic domain contains all the redox centers. NADH-quinone oxidoreductase forms a supercomplex with ubiquinol-cytochrome c reductase complex (complex III or cytochrome b-c1 complex) and cytochrome c oxidase (complex IV), which stabilizes the NADH-quinone oxidoreductase complex. The cofactor is [4Fe-4S] cluster.

It localises to the cell inner membrane. It catalyses the reaction a quinone + NADH + 5 H(+)(in) = a quinol + NAD(+) + 4 H(+)(out). In terms of biological role, NDH-1 shuttles electrons from NADH, via FMN and iron-sulfur (Fe-S) centers, to quinones in the respiratory chain. The immediate electron acceptor for the enzyme in this species is believed to be ubiquinone. Couples the redox reaction to proton translocation (for every two electrons transferred, four hydrogen ions are translocated across the cytoplasmic membrane), and thus conserves the redox energy in a proton gradient. This chain is NADH-quinone oxidoreductase subunit I, found in Paracoccus denitrificans (strain Pd 1222).